Consider the following 243-residue polypeptide: Probable transcriptional regulatory protein LCABL_11860 (243 aa).

The segment at 1-23 (MSGHSKWHNIQGRKNAQDSKRGK) is disordered.

Belongs to the TACO1 family.

It is found in the cytoplasm. The chain is Probable transcriptional regulatory protein LCABL_11860 from Lacticaseibacillus casei (strain BL23) (Lactobacillus casei).